We begin with the raw amino-acid sequence, 528 residues long: Tyrosine-protein kinase transforming protein Yes (528 aa).

The segment covering 1 to 12 (DKGPAMKYRTDN) has biased composition (basic and acidic residues). The segment at 1–35 (DKGPAMKYRTDNTPEPISSHVSHYGSDSSQATQSP) is disordered. A compositionally biased stretch (low complexity) spans 18 to 29 (SSHVSHYGSDSS). Residues 81-142 (GGGTVFVALY…PSNYVAPADS (62 aa)) enclose the SH3 domain. The 98-residue stretch at 148–245 (WYFGKMGRKD…GLCHKLTTVC (98 aa)) folds into the SH2 domain. Positions 267–520 (LRLEVKLGQG…YIQSFLEDYF (254 aa)) constitute a Protein kinase domain. ATP-binding positions include 273–281 (LGQGCFGEV) and Lys-295. Asp-386 functions as the Proton acceptor in the catalytic mechanism. Tyr-416 carries the post-translational modification Phosphotyrosine; by autocatalysis.

This sequence belongs to the protein kinase superfamily. Tyr protein kinase family. SRC subfamily.

It carries out the reaction L-tyrosyl-[protein] + ATP = O-phospho-L-tyrosyl-[protein] + ADP + H(+). This is Tyrosine-protein kinase transforming protein Yes (V-YES) from Galliformes (Y73SV).